Reading from the N-terminus, the 303-residue chain is Protein REVEILLE 5 (303 aa).

In terms of domain architecture, HTH myb-type spans 54-108 (TIKKSRENWTDQEHDKFLEALHLFDRDWKKIEAFVGSKTVVQIRSHAQKYFLKVQ). Residues 81–104 (WKKIEAFVGSKTVVQIRSHAQKYF) constitute a DNA-binding region (H-T-H motif). A disordered region spans residues 109-130 (KSGANEHLPPPRPKRKASHPYP).

It localises to the nucleus. Its function is as follows. Probable transcription factor. This Arabidopsis thaliana (Mouse-ear cress) protein is Protein REVEILLE 5 (RVE5).